We begin with the raw amino-acid sequence, 285 residues long: Methionine aminopeptidase 2 (285 aa).

His114 contributes to the substrate binding site. Positions 131, 142, and 205 each coordinate a divalent metal cation. Residue His212 participates in substrate binding. Glu238 and Glu269 together coordinate a divalent metal cation.

In terms of assembly, monomer. The cofactor is Co(2+). Zn(2+) serves as cofactor. Requires Mn(2+) as cofactor. It depends on Fe(2+) as a cofactor.

It catalyses the reaction Release of N-terminal amino acids, preferentially methionine, from peptides and arylamides.. With respect to regulation, inhibited by bengamide derivatives and by various metalloform-selective inhibitors. Removes the N-terminal methionine from nascent proteins. The N-terminal methionine is often cleaved when the second residue in the primary sequence is small and uncharged (Met-Ala-, Cys, Gly, Pro, Ser, Thr, or Val). Requires deformylation of the N(alpha)-formylated initiator methionine before it can be hydrolyzed. This Mycobacterium tuberculosis (strain ATCC 25618 / H37Rv) protein is Methionine aminopeptidase 2.